Here is a 793-residue protein sequence, read N- to C-terminus: ABC transporter G family member 1 (793 aa).

Over residues 1 to 20 (MDSNNNNNNENEAFSGASES) the composition is skewed to low complexity. Residues 1–96 (MDSNNNNNNE…NNNQNNNIIN (96 aa)) are disordered. Residues 21–37 (SEFRKIVEENENEREFE) are compositionally biased toward basic and acidic residues. The segment covering 59-68 (ETINPNISLD) has biased composition (polar residues). Residues 67-102 (LDNNNNNNQNNQNNQNNNNNNNNQNNNIINNLNKKN) adopt a coiled-coil conformation. The span at 69–96 (NNNNNNQNNQNNQNNNNNNNNQNNNIIN) shows a compositional bias: low complexity. An ABC transporter domain is found at 123 to 364 (VQITEKGKKK…FNANGYHCSE (242 aa)). 156-163 (GPSGAGKT) contacts ATP. Positions 382 to 398 (DQADSDDDDYNDEEEEI) are enriched in acidic residues. Residues 382 to 457 (DQADSDDDDY…QSTDGRARRR (76 aa)) are disordered. Gly residues predominate over residues 399-413 (GGGGGGSGGGAGGIE). Over residues 421–437 (PTMNGSAVDNIKNNELK) the composition is skewed to polar residues. Residues 438–448 (QQQQQQQQQQQ) show a composition bias toward low complexity. The 259-residue stretch at 527–785 (MAFKVNLIQA…VLTFLVLKLK (259 aa)) folds into the ABC transmembrane type-2 domain. The next 7 membrane-spanning stretches (helical) occupy residues 533 to 553 (LIQA…LGLG), 563 to 583 (VVAF…IHVF), 610 to 630 (FMDA…VYWM), 647 to 667 (FVLM…LISS), 674 to 694 (VGTA…GFFI), 701 to 721 (GWLV…AAVI), and 764 to 784 (VWIL…VLKL).

Belongs to the ABC transporter superfamily. ABCG family.

Its subcellular location is the membrane. The polypeptide is ABC transporter G family member 1 (abcG1) (Dictyostelium discoideum (Social amoeba)).